The sequence spans 419 residues: Tyrosine--tRNA ligase (419 aa).

Tyr34 contacts L-tyrosine. Residues Pro39–His48 carry the 'HIGH' region motif. Tyr168 and Gln172 together coordinate L-tyrosine. Residues Lys230–Ser234 carry the 'KMSKS' region motif. Residue Lys233 coordinates ATP. Positions Ala352–Tyr418 constitute an S4 RNA-binding domain.

The protein belongs to the class-I aminoacyl-tRNA synthetase family. TyrS type 1 subfamily. In terms of assembly, homodimer.

It localises to the cytoplasm. It catalyses the reaction tRNA(Tyr) + L-tyrosine + ATP = L-tyrosyl-tRNA(Tyr) + AMP + diphosphate + H(+). In terms of biological role, catalyzes the attachment of tyrosine to tRNA(Tyr) in a two-step reaction: tyrosine is first activated by ATP to form Tyr-AMP and then transferred to the acceptor end of tRNA(Tyr). The chain is Tyrosine--tRNA ligase from Listeria monocytogenes serotype 4b (strain F2365).